A 303-amino-acid polypeptide reads, in one-letter code: Probable 5-dehydro-4-deoxyglucarate dehydratase (303 aa).

Belongs to the DapA family.

It carries out the reaction 5-dehydro-4-deoxy-D-glucarate + H(+) = 2,5-dioxopentanoate + CO2 + H2O. The protein operates within carbohydrate acid metabolism; D-glucarate degradation; 2,5-dioxopentanoate from D-glucarate: step 2/2. This Pseudomonas syringae pv. syringae (strain B728a) protein is Probable 5-dehydro-4-deoxyglucarate dehydratase.